A 208-amino-acid polypeptide reads, in one-letter code: MSLKGTIVLLGLLWSFQATLGIRFVIDREECFSHKAEYEGDTLHVSFVVIKSDSQWHFNEDGVDLVIHGPTGEQIHDFREQISAKHDFVVQKKGVYRFCFTNKSPYHETIDFDVQLGHFAYYDQHAKDEHFTPLMEQISKLEEALYNIQFEQHWLEAQTDRQAIVNENMSKRAVHKALFESFALIGASFLQVYLLRRLFERKLGMSRV.

An N-terminal signal peptide occupies residues 1-21; it reads MSLKGTIVLLGLLWSFQATLG. Residues 22-176 lie on the Lumenal side of the membrane; that stretch reads IRFVIDREEC…ENMSKRAVHK (155 aa). In terms of domain architecture, GOLD spans 29–116; sequence EECFSHKAEY…HETIDFDVQL (88 aa). Positions 134–149 form a coiled coil; that stretch reads LMEQISKLEEALYNIQ. An N-linked (GlcNAc...) asparagine glycan is attached at Asn-168. A helical transmembrane segment spans residues 177-195; the sequence is ALFESFALIGASFLQVYLL. Residues 196–208 are Cytoplasmic-facing; that stretch reads RRLFERKLGMSRV. The COPII vesicle coat-binding motif lies at 198–199; that stretch reads LF. A COPI vesicle coat-binding motif is present at residues 198-208; that stretch reads LFERKLGMSRV. Residues 207 to 208 carry the Required for the export from the endoplasmic reticulum to the Golgi motif; sequence RV.

Belongs to the EMP24/GP25L family. Probably oligomerizes with other members of the EMP24/GP25L family. Associates with the COPI vesicle coat (coatomer). Associates with the COPII vesicle coat (coatomer). Interacts with p24delta5.

Its subcellular location is the golgi apparatus. The protein resides in the cis-Golgi network membrane. It is found in the golgi stack membrane. In terms of biological role, involved in vesicular protein trafficking. Mainly functions in the early secretory pathway but also in post-Golgi membranes. Thought to act as cargo receptor at the lumenal side for incorporation of secretory cargo molecules into transport vesicles and to be involved in vesicle coat formation at the cytoplasmic side. Interacts with p24delta5 at endoplasmic reticulum export sites for endoplasmic reticulum exit and coupled transport to the Golgi apparatus. The sequence is that of Transmembrane emp24 domain-containing protein p24beta2 from Arabidopsis thaliana (Mouse-ear cress).